The following is a 231-amino-acid chain: Trypsin-2 (231 aa).

Residues 1 to 4 (AAFA) form the signal peptide. The propeptide at 5-9 (TEDDK) is activation peptide. Residues 10–229 (IVGGYECKAY…FNDWLTSTMA (220 aa)) enclose the Peptidase S1 domain. 6 disulfide bridges follow: C16–C145, C34–C50, C118–C218, C125–C191, C156–C170, and C181–C205. The Charge relay system role is filled by H49. 4 residues coordinate Ca(2+): E61, N63, V66, and E71. Residue D93 is the Charge relay system of the active site. The active-site Charge relay system is S185.

The protein belongs to the peptidase S1 family. Ca(2+) serves as cofactor.

It localises to the secreted. It is found in the extracellular space. The catalysed reaction is Preferential cleavage: Arg-|-Xaa, Lys-|-Xaa.. The polypeptide is Trypsin-2 (Salmo salar (Atlantic salmon)).